Consider the following 538-residue polypeptide: Probable cytochrome P450 309a2 (538 aa).

Cys-483 contacts heme.

This sequence belongs to the cytochrome P450 family. Heme serves as cofactor.

The protein localises to the endoplasmic reticulum membrane. It is found in the microsome membrane. In terms of biological role, may be involved in the metabolism of insect hormones and in the breakdown of synthetic insecticides. The chain is Probable cytochrome P450 309a2 (Cyp309a2) from Drosophila melanogaster (Fruit fly).